A 341-amino-acid polypeptide reads, in one-letter code: UDP-3-O-acylglucosamine N-acyltransferase (341 aa).

Catalysis depends on His-237, which acts as the Proton acceptor.

Belongs to the transferase hexapeptide repeat family. LpxD subfamily. In terms of assembly, homotrimer.

It catalyses the reaction a UDP-3-O-[(3R)-3-hydroxyacyl]-alpha-D-glucosamine + a (3R)-hydroxyacyl-[ACP] = a UDP-2-N,3-O-bis[(3R)-3-hydroxyacyl]-alpha-D-glucosamine + holo-[ACP] + H(+). The protein operates within bacterial outer membrane biogenesis; LPS lipid A biosynthesis. Catalyzes the N-acylation of UDP-3-O-acylglucosamine using 3-hydroxyacyl-ACP as the acyl donor. Is involved in the biosynthesis of lipid A, a phosphorylated glycolipid that anchors the lipopolysaccharide to the outer membrane of the cell. In Azoarcus sp. (strain BH72), this protein is UDP-3-O-acylglucosamine N-acyltransferase.